Reading from the N-terminus, the 320-residue chain is Beta-sarcoglycan (320 aa).

The span at 1–10 (MAAAAAAAAA) shows a compositional bias: low complexity. Positions 1–34 (MAAAAAAAAATEQQGSNGPVKKSMREKAVERRNV) are disordered. The Cytoplasmic portion of the chain corresponds to 1 to 67 (MAAAAAAAAA…GLRGRKGNLA (67 aa)). A compositionally biased stretch (basic and acidic residues) spans 23-34 (SMREKAVERRNV). The chain crosses the membrane as a helical; Signal-anchor for type II membrane protein span at residues 68-88 (ICVIVLLFILAVINLLITLVI). The Extracellular portion of the chain corresponds to 89–320 (WAVIRIGPNG…VSDNPCGNTH (232 aa)). 3 N-linked (GlcNAc...) asparagine glycosylation sites follow: Asn160, Asn213, and Asn260. 2 disulfide bridges follow: Cys290–Cys316 and Cys292–Cys309.

The protein belongs to the sarcoglycan beta/delta/gamma/zeta family. Cross-link to form 2 major subcomplexes: one consisting of SGCB, SGCD and SGCG and the other consisting of SGCB and SGCD. The association between SGCB and SGCG is particularly strong while SGCA is loosely associated with the other sarcoglycans. Disulfide bonds are present. As to expression, most strongly expressed in skeletal and heart muscle. Also detected in proliferating myoblasts.

The protein resides in the cell membrane. Its subcellular location is the sarcolemma. It is found in the cytoplasm. The protein localises to the cytoskeleton. Its function is as follows. Component of the sarcoglycan complex, a subcomplex of the dystrophin-glycoprotein complex which forms a link between the F-actin cytoskeleton and the extracellular matrix. The chain is Beta-sarcoglycan (Sgcb) from Mus musculus (Mouse).